Here is a 760-residue protein sequence, read N- to C-terminus: Pentatricopeptide repeat-containing protein At1g20230 (760 aa).

15 PPR repeats span residues 49-79 (DGYISAKLIASYSNYNCFNDADLVLQSIPDP), 80-114 (TIYSFSSLIYALTKAKLFTQSIGVFSRMFSHGLIP), 115-149 (DSHVLPNLFKVCAELSAFKVGKQIHCVSCVSGLDM), 150-180 (DAFVQGSMFHMYMRCGRMGDARKVFDRMSDK), 181-215 (DVVTCSALLCAYARKGCLEEVVRILSEMESSGIEA), 216-250 (NIVSWNGILSGFNRSGYHKEAVVMFQKIHHLGFCP), 251-285 (DQVTVSSVLPSVGDSEMLNMGRLIHGYVIKQGLLK), 286-316 (DKCVISAMIDMYGKSGHVYGIISLFNQFEMM), 317-351 (EAGVCNAYITGLSRNGLVDKALEMFELFKEQTMEL), 352-386 (NVVSWTSIIAGCAQNGKDIEALELFREMQVAGVKP), 387-421 (NHVTIPSMLPACGNIAALGHGRSTHGFAVRVHLLD), 422-452 (NVHVGSALIDMYAKCGRINLSQIVFNMMPTK), 453-487 (NLVCWNSLMNGFSMHGKAKEVMSIFESLMRTRLKP), 488-523 (DFISFTSLLSACGQVGLTDEGWKYFKMMSEEYGIKP), and 524-554 (RLEHYSCMVNLLGRAGKLQEAYDLIKEMPFE). The segment at 559-634 (VWGALLNSCR…NPGCSWIQVK (76 aa)) is type E motif. The segment at 635-665 (NRVYTLLAGDKSHPQIDQITEKMDEISKEMR) is type E(+) motif. Positions 666–760 (KSGHRPNLDF…DGICSCGDFW (95 aa)) are type DYW motif.

This sequence belongs to the PPR family. PCMP-H subfamily.

The polypeptide is Pentatricopeptide repeat-containing protein At1g20230 (PCMP-H21) (Arabidopsis thaliana (Mouse-ear cress)).